The following is a 321-amino-acid chain: GDP-L-fucose synthase (321 aa).

Glycine 14–glycine 20 lines the NADP(+) pocket. Tyrosine 143 (proton donor/acceptor) is an active-site residue. NADP(+) is bound by residues lysine 147, proline 170–valine 173, and histidine 186. Positions 194, 208, 215, and 277 each coordinate substrate.

The protein belongs to the NAD(P)-dependent epimerase/dehydratase family. Fucose synthase subfamily. As to quaternary structure, homodimer.

It catalyses the reaction GDP-beta-L-fucose + NADP(+) = GDP-4-dehydro-alpha-D-rhamnose + NADPH + H(+). It functions in the pathway nucleotide-sugar biosynthesis; GDP-L-fucose biosynthesis via de novo pathway; GDP-L-fucose from GDP-alpha-D-mannose: step 2/2. In terms of biological role, catalyzes the two-step NADP-dependent conversion of GDP-4-dehydro-6-deoxy-D-mannose to GDP-fucose, involving an epimerase and a reductase reaction. This Homo sapiens (Human) protein is GDP-L-fucose synthase.